The sequence spans 517 residues: MHHSFLSANGGVVMSKKTAHGLRLKHLGIKTYHEAIIYMREDCHVCHSEGFEVQTRIQVTLGQHSIIATLNVVTSELLAPGEAGLSDYAWDALHAKEGDEIQVSHPKPLESLSYVHTKIYGNELSYEQMKVIIDDVLSGRLSDVQISAFLAASSAGRLTRTEIMKLTKAMIDSGDRLSWSSPLVVDKHCVGGLPGNRTTLIVVPIVAAFGLMIPKTSSRAITSPAGTADTMETLAPVHLSPQKMRQVVEQENGCIVWGGAVSLSPADDVLIRVERAIDLDSEGQLVASILSKKIATGATHAVIDIPVGPTAKVRNQSMALLLKQSLEEVGNELGLVVHTILTDGSQPVGHGIGPSLEARDVMSVLQGLPDAPNDLRERALTLAGAALECSSKVQPGLGKSIAKQILESGKAFKKFQAICEAQGGMRELTKARFTHPVVAAKEGKVSLIDNRKLAKIAKLAGAPKSKSAGIDLHAHVGESVEQGEPLFTIHSESSGELNYACDLLRDKQDIIILGENS.

The protein belongs to the thymidine/pyrimidine-nucleoside phosphorylase family. Type 2 subfamily.

The enzyme catalyses thymidine + phosphate = 2-deoxy-alpha-D-ribose 1-phosphate + thymine. This Legionella pneumophila (strain Corby) protein is Putative thymidine phosphorylase.